Here is a 425-residue protein sequence, read N- to C-terminus: Tyrosine--tRNA ligase (425 aa).

Tyrosine 37 contacts L-tyrosine. The 'HIGH' region signature appears at 42–51 (PTADSLHLGH). Tyrosine 175 and glutamine 179 together coordinate L-tyrosine. The 'KMSKS' region signature appears at 235–239 (KFGKT). Lysine 238 lines the ATP pocket. In terms of domain architecture, S4 RNA-binding spans 357–414 (ADLQQALVSAELVPSRGQARTMISSNAVTINGEKQANPEYIFSASDRLFDRYTLLRRG).

The protein belongs to the class-I aminoacyl-tRNA synthetase family. TyrS type 1 subfamily. In terms of assembly, homodimer.

Its subcellular location is the cytoplasm. The catalysed reaction is tRNA(Tyr) + L-tyrosine + ATP = L-tyrosyl-tRNA(Tyr) + AMP + diphosphate + H(+). Functionally, catalyzes the attachment of tyrosine to tRNA(Tyr) in a two-step reaction: tyrosine is first activated by ATP to form Tyr-AMP and then transferred to the acceptor end of tRNA(Tyr). This Pectobacterium atrosepticum (strain SCRI 1043 / ATCC BAA-672) (Erwinia carotovora subsp. atroseptica) protein is Tyrosine--tRNA ligase.